A 91-amino-acid polypeptide reads, in one-letter code: Large ribosomal subunit protein eL37 (91 aa).

Zn(2+)-binding residues include C19, C22, C34, and C37. Residues 19–37 (CKRCGKSSFHIQKKRCASC) form a C4-type zinc finger.

It belongs to the eukaryotic ribosomal protein eL37 family. Zn(2+) serves as cofactor.

In terms of biological role, binds to the 23S rRNA. The protein is Large ribosomal subunit protein eL37 of Caenorhabditis elegans.